We begin with the raw amino-acid sequence, 156 residues long: SsrA-binding protein (156 aa).

It belongs to the SmpB family.

The protein resides in the cytoplasm. Required for rescue of stalled ribosomes mediated by trans-translation. Binds to transfer-messenger RNA (tmRNA), required for stable association of tmRNA with ribosomes. tmRNA and SmpB together mimic tRNA shape, replacing the anticodon stem-loop with SmpB. tmRNA is encoded by the ssrA gene; the 2 termini fold to resemble tRNA(Ala) and it encodes a 'tag peptide', a short internal open reading frame. During trans-translation Ala-aminoacylated tmRNA acts like a tRNA, entering the A-site of stalled ribosomes, displacing the stalled mRNA. The ribosome then switches to translate the ORF on the tmRNA; the nascent peptide is terminated with the 'tag peptide' encoded by the tmRNA and targeted for degradation. The ribosome is freed to recommence translation, which seems to be the essential function of trans-translation. This Staphylococcus haemolyticus (strain JCSC1435) protein is SsrA-binding protein.